The following is a 491-amino-acid chain: Glycogen synthase (491 aa).

Position 15 (K15) interacts with ADP-alpha-D-glucose.

It belongs to the glycosyltransferase 1 family. Bacterial/plant glycogen synthase subfamily.

It catalyses the reaction [(1-&gt;4)-alpha-D-glucosyl](n) + ADP-alpha-D-glucose = [(1-&gt;4)-alpha-D-glucosyl](n+1) + ADP + H(+). The protein operates within glycan biosynthesis; glycogen biosynthesis. In terms of biological role, synthesizes alpha-1,4-glucan chains using ADP-glucose. The protein is Glycogen synthase of Treponema denticola (strain ATCC 35405 / DSM 14222 / CIP 103919 / JCM 8153 / KCTC 15104).